The following is a 285-amino-acid chain: Acetylglutamate kinase (285 aa).

Substrate-binding positions include 64 to 65, Arg-86, and Asn-179; that span reads GG.

Belongs to the acetylglutamate kinase family. ArgB subfamily.

The protein resides in the plastid. It localises to the chloroplast. The enzyme catalyses N-acetyl-L-glutamate + ATP = N-acetyl-L-glutamyl 5-phosphate + ADP. The protein operates within amino-acid biosynthesis; L-arginine biosynthesis; N(2)-acetyl-L-ornithine from L-glutamate: step 2/4. Catalyzes the ATP-dependent phosphorylation of N-acetyl-L-glutamate. The protein is Acetylglutamate kinase of Pyropia yezoensis (Susabi-nori).